The following is a 199-amino-acid chain: Shikimate kinase (199 aa).

Residue 32-37 (GSGKTS) participates in ATP binding. Thr-36 serves as a coordination point for Mg(2+). 3 residues coordinate substrate: Asp-54, Arg-78, and Gly-100. Residue Arg-138 coordinates ATP. Arg-157 provides a ligand contact to substrate.

The protein belongs to the shikimate kinase family. In terms of assembly, monomer. It depends on Mg(2+) as a cofactor.

The protein localises to the cytoplasm. The enzyme catalyses shikimate + ATP = 3-phosphoshikimate + ADP + H(+). It functions in the pathway metabolic intermediate biosynthesis; chorismate biosynthesis; chorismate from D-erythrose 4-phosphate and phosphoenolpyruvate: step 5/7. Catalyzes the specific phosphorylation of the 3-hydroxyl group of shikimic acid using ATP as a cosubstrate. This is Shikimate kinase from Synechococcus sp. (strain CC9605).